The sequence spans 1108 residues: Retinal guanylyl cyclase 2 (1108 aa).

Residues 1–50 (MFLGLGRFSRLVLWFAAFRKLLGHHGLASAKFLWCLCLLSVMSLPQQVWT) form the signal peptide. Residues 51–467 (LPYKIGVVGP…KICHGGIDPA (417 aa)) are Extracellular-facing. A disulfide bond links C104 and C132. Residues 468 to 490 (FAMMVCLTLLIALLSINGFAYFI) form a helical membrane-spanning segment. Topologically, residues 491–1108 (RRRINKIQLI…AERQLVRNKP (618 aa)) are cytoplasmic. In terms of domain architecture, Protein kinase spans 532–812 (FQITSEVQSG…DEIFNQFKTF (281 aa)). The 131-residue stretch at 884–1014 (TLYFSDIVGF…DTVNTASRME (131 aa)) folds into the Guanylate cyclase domain.

The protein belongs to the adenylyl cyclase class-4/guanylyl cyclase family. As to quaternary structure, homodimer. Interacts with RD3; promotes the exit of GUCY2F from the endoplasmic reticulum and its trafficking to the photoreceptor outer segments. In terms of processing, there are 9 conserved cysteine residues in sensory guanylate cyclases, 6 in the extracellular domain, which may be involved in intra- or interchain disulfide bonds. In terms of tissue distribution, retina. Localized exclusively in the outer nuclear layer and inner segments of the rod and cone photoreceptor cells.

Its subcellular location is the photoreceptor outer segment membrane. The enzyme catalyses GTP = 3',5'-cyclic GMP + diphosphate. With respect to regulation, activated by GUCA1B when free calcium ions concentration is low, and inhibited by GUCA1B when free calcium ions concentration is high. Inhibited by RD3. In terms of biological role, responsible for the synthesis of cyclic GMP (cGMP) in rods and cones of photoreceptors. Plays an essential role in phototransduction, by mediating cGMP replenishment. May also participate in the trafficking of membrane-asociated proteins to the photoreceptor outer segment membrane. The polypeptide is Retinal guanylyl cyclase 2 (GUCY2F) (Homo sapiens (Human)).